Consider the following 508-residue polypeptide: Photosystem II CP47 reaction center protein (508 aa).

Helical transmembrane passes span 21 to 36 (AVHLMHTALVSGWAGS), 101 to 115 (IVLSGLLFLAAIWHW), 140 to 156 (GIHLFLSGVLCFGFGAF), 203 to 218 (IAAGILGILAGLFHLS), 237 to 252 (VLSSSIAAVFFAAFVV), and 457 to 472 (CFALLFFFGHLWHGSR).

The protein belongs to the PsbB/PsbC family. PsbB subfamily. PSII is composed of 1 copy each of membrane proteins PsbA, PsbB, PsbC, PsbD, PsbE, PsbF, PsbH, PsbI, PsbJ, PsbK, PsbL, PsbM, PsbT, PsbX, PsbY, PsbZ, Psb30/Ycf12, at least 3 peripheral proteins of the oxygen-evolving complex and a large number of cofactors. It forms dimeric complexes. Requires Binds multiple chlorophylls. PSII binds additional chlorophylls, carotenoids and specific lipids. as cofactor.

It is found in the plastid. The protein localises to the chloroplast thylakoid membrane. In terms of biological role, one of the components of the core complex of photosystem II (PSII). It binds chlorophyll and helps catalyze the primary light-induced photochemical processes of PSII. PSII is a light-driven water:plastoquinone oxidoreductase, using light energy to abstract electrons from H(2)O, generating O(2) and a proton gradient subsequently used for ATP formation. The chain is Photosystem II CP47 reaction center protein from Zygnema circumcarinatum (Green alga).